The chain runs to 357 residues: Uroporphyrinogen decarboxylase (357 aa).

Residues 30 to 34, D79, Y154, S209, and H336 contribute to the substrate site; that span reads RQAGR.

The protein belongs to the uroporphyrinogen decarboxylase family. In terms of assembly, homodimer.

It localises to the cytoplasm. It carries out the reaction uroporphyrinogen III + 4 H(+) = coproporphyrinogen III + 4 CO2. It functions in the pathway porphyrin-containing compound metabolism; protoporphyrin-IX biosynthesis; coproporphyrinogen-III from 5-aminolevulinate: step 4/4. Catalyzes the decarboxylation of four acetate groups of uroporphyrinogen-III to yield coproporphyrinogen-III. The polypeptide is Uroporphyrinogen decarboxylase (Mycobacterium leprae (strain Br4923)).